The chain runs to 1481 residues: Cystic fibrosis transmembrane conductance regulator (1481 aa).

The Cytoplasmic segment spans residues 1–77 (MQRSPLEKAS…KLINALRRCF (77 aa)). A helical membrane pass occupies residues 78–98 (FWRFTFYGILLYLGEVTKAVQ). The region spanning 81 to 365 (FTFYGILLYL…WAVQTWYDSL (285 aa)) is the ABC transmembrane type-1 1 domain. The Extracellular segment spans residues 99–122 (PLLLGRIIASYDPDNKTERSIAIY). A helical membrane pass occupies residues 123 to 146 (LGIGLCLLFIVRTLLLHPAIFGLH). Residues 147-195 (HIGMQMRIAMFSLIYKKTLKLSSRVLDKISIGQLVSLLSNNLNKFDEGL) are Cytoplasmic-facing. A helical transmembrane segment spans residues 196–216 (ALAHFVWIAPLQVALLMGLIW). The Extracellular segment spans residues 217–222 (ELLQAS). The chain crosses the membrane as a helical span at residues 223-243 (AFCGLGFLIVLALFQAGLGRM). Topologically, residues 244-298 (MMKYRDQRAGKINERLVITSEMIENIQSVKAYCWEEAMEKIIENLRQTELKLTRK) are cytoplasmic. Residues 299 to 319 (AAYVRYFNSSAFFFSGFFVVF) traverse the membrane as a helical segment. At 320–339 (LSVLPYALIKGIVLRKIFTT) the chain is on the extracellular side. Residues 340-358 (ISFCIVLRMAVTRQFPWAV) traverse the membrane as a helical segment. Residues 359–858 (QTWYDSLGAI…YLRYITLHKS (500 aa)) are Cytoplasmic-facing. ATP-binding positions include tryptophan 401, serine 434, 458 to 465 (GSTGAGKT), and glutamine 493. An ABC transporter 1 domain is found at 423 to 646 (NGDDNLFFSN…RPDFSSKLMG (224 aa)). Cysteine 524 carries the S-palmitoyl cysteine lipid modification. Phosphoserine is present on residues serine 549 and serine 660. Positions 654–831 (SSERRNSILT…EEINEEDLKE (178 aa)) are disordered R region. Position 670 is a phosphoserine; by PKA (serine 670). Phosphoserine is present on serine 686. Residue lysine 688 forms a Glycyl lysine isopeptide (Lys-Gly) (interchain with G-Cter in ubiquitin) linkage. Serine 700 and serine 712 each carry phosphoserine. Threonine 717 carries the phosphothreonine modification. A phosphoserine mark is found at serine 737, serine 753, serine 768, serine 790, serine 795, and serine 813. A helical transmembrane segment spans residues 859 to 879 (LIFVLIWCLVIFLAEVAASLV). The region spanning 859-1155 (LIFVLIWCLV…AVNSSIDVDS (297 aa)) is the ABC transmembrane type-1 2 domain. Topologically, residues 880 to 918 (VLWLLGNTPFQDKGNSTYSRNNSYAVIITNTSSYYVFYI) are extracellular. 3 N-linked (GlcNAc...) asparagine glycosylation sites follow: asparagine 894, asparagine 900, and asparagine 909. A discontinuously helical transmembrane segment spans residues 919 to 939 (YVGVADTLLALGFFRGLPLVH). Topologically, residues 940–990 (TLITVSKMLHHKMLHSVLQAPMSTLNTLKAGGILNRFSKDIAILDDLLPLT) are cytoplasmic. The helical transmembrane segment at 991–1011 (IFDFIQLLLIVIGAIAVVSVL) threads the bilayer. The Extracellular segment spans residues 1012–1013 (QP). A helical transmembrane segment spans residues 1014-1034 (YIFLATVPVIAAFILLRAYFL). Topologically, residues 1035-1095 (QTSQQLKQLE…TANWFLYLST (61 aa)) are cytoplasmic. The helical transmembrane segment at 1096-1116 (LRWFQMRIEMIFVIFFIAVTF) threads the bilayer. Topologically, residues 1117 to 1130 (ISILTTGEGEGTVG) are extracellular. The chain crosses the membrane as a helical span at residues 1131-1151 (IILTLAMNIMSTLQWAVNSSI). At 1152-1481 (DVDSLMRSVS…TEEEVQETRL (330 aa)) the chain is on the cytoplasmic side. Residues 1211-1444 (MTIKDLTAKY…KSLFRQAISH (234 aa)) form the ABC transporter 2 domain. Residues tyrosine 1220 and 1245–1252 (GRTGSGKS) each bind ATP. The segment at 1387–1481 (RALKQAFADC…TEEEVQETRL (95 aa)) is interaction with GORASP2. A lipid anchor (S-palmitoyl cysteine) is attached at cysteine 1396. Serine 1445 and serine 1457 each carry phosphoserine. Residues 1453–1481 (HRNSSKYKSQPQIASLKEETEEEVQETRL) form a disordered region. The span at 1471-1481 (ETEEEVQETRL) shows a compositional bias: acidic residues. The PDZ-binding motif lies at 1479–1481 (TRL).

Belongs to the ABC transporter superfamily. ABCC family. CFTR transporter (TC 3.A.1.202) subfamily. Monomer; does not require oligomerization for channel activity. May form oligomers in the membrane. Interacts with SLC26A3, SLC26A6 and NHERF1. Interacts with SHANK2. Interacts with MYO6. Interacts (via C-terminus) with GOPC (via PDZ domain); this promotes CFTR internalization and thereby decreases channel activity. Interacts with SLC4A7 through NHERF1. Found in a complex with MYO5B and RAB11A. Interacts with ANO1. Interacts with SLC26A8. Interacts with AHCYL1; the interaction increases CFTR activity. Interacts with CSE1L. The core-glycosylated form interacts with GORASP2 (via PDZ GRASP-type 1 domain) in respone to ER stress. Interacts with MARCHF2; the interaction leads to CFTR ubiqtuitination and degradation. Interacts with ADGRG2. In terms of processing, N-glycosylated. Post-translationally, phosphorylated; cAMP treatment promotes phosphorylation and activates the channel. Dephosphorylation decreases the ATPase activity (in vitro). Phosphorylation at PKA sites activates the channel. Phosphorylation at PKC sites enhances the response to phosphorylation by PKA. Phosphorylated by AMPK; this inhibits channel activity. Ubiquitinated, leading to its degradation in the lysosome. Deubiquitination by USP10 in early endosomes enhances its endocytic recycling to the cell membrane. Ubiquitinated by RNF185 during ER stress. Ubiquitinated by MARCHF2.

It localises to the apical cell membrane. The protein localises to the early endosome membrane. It is found in the cell membrane. The protein resides in the recycling endosome membrane. Its subcellular location is the endoplasmic reticulum membrane. It localises to the nucleus. It carries out the reaction ATP + H2O + closed Cl(-) channel = ADP + phosphate + open Cl(-) channel.. The catalysed reaction is chloride(in) = chloride(out). The enzyme catalyses hydrogencarbonate(in) = hydrogencarbonate(out). It catalyses the reaction ATP + H2O = ADP + phosphate + H(+). Functionally, epithelial ion channel that plays an important role in the regulation of epithelial ion and water transport and fluid homeostasis. Mediates the transport of chloride ions across the cell membrane. Possesses an intrinsic ATPase activity and utilizes ATP to gate its channel; the passive flow of anions through the channel is gated by cycles of ATP binding and hydrolysis by the ATP-binding domains. The ion channel is also permeable to HCO(3)(-); selectivity depends on the extracellular chloride concentration. Exerts its function also by modulating the activity of other ion channels and transporters. Contributes to the regulation of the pH and the ion content of the epithelial fluid layer. Modulates the activity of the epithelial sodium channel (ENaC) complex, in part by regulating the cell surface expression of the ENaC complex. May regulate bicarbonate secretion and salvage in epithelial cells by regulating the transporter SLC4A7. Can inhibit the chloride channel activity of ANO1. Plays a role in the chloride and bicarbonate homeostasis during sperm epididymal maturation and capacitation. In Aotus nancymaae (Ma's night monkey), this protein is Cystic fibrosis transmembrane conductance regulator.